The sequence spans 134 residues: Early E3B 14.9 kDa protein (134 aa).

The N-terminal stretch at 1 to 19 (MQAMLPVILILLLPCIALA) is a signal peptide. A helical membrane pass occupies residues 54-78 (YWIVIVGIINILSCTFFSITIYPTF).

It belongs to the adenoviridae E3_14 family. Post-translationally, phosphorylated on serine; O-glycosylated, but not N-glycosylated.

It localises to the host membrane. Down-regulates the EGF receptor and prevents cytolysis by TNF. The polypeptide is Early E3B 14.9 kDa protein (Homo sapiens (Human)).